Here is a 161-residue protein sequence, read N- to C-terminus: 6,7-dimethyl-8-ribityllumazine synthase (161 aa).

5-amino-6-(D-ribitylamino)uracil contacts are provided by residues W26, 58–60, and 81–83; these read AFE and VVI. 86 to 87 contributes to the (2S)-2-hydroxy-3-oxobutyl phosphate binding site; that stretch reads GT. H89 acts as the Proton donor in catalysis. F114 lines the 5-amino-6-(D-ribitylamino)uracil pocket. R128 serves as a coordination point for (2S)-2-hydroxy-3-oxobutyl phosphate.

It belongs to the DMRL synthase family.

It carries out the reaction (2S)-2-hydroxy-3-oxobutyl phosphate + 5-amino-6-(D-ribitylamino)uracil = 6,7-dimethyl-8-(1-D-ribityl)lumazine + phosphate + 2 H2O + H(+). It participates in cofactor biosynthesis; riboflavin biosynthesis; riboflavin from 2-hydroxy-3-oxobutyl phosphate and 5-amino-6-(D-ribitylamino)uracil: step 1/2. In terms of biological role, catalyzes the formation of 6,7-dimethyl-8-ribityllumazine by condensation of 5-amino-6-(D-ribitylamino)uracil with 3,4-dihydroxy-2-butanone 4-phosphate. This is the penultimate step in the biosynthesis of riboflavin. In Nocardioides sp. (strain ATCC BAA-499 / JS614), this protein is 6,7-dimethyl-8-ribityllumazine synthase.